The chain runs to 215 residues: Cytokinin riboside 5'-monophosphate phosphoribohydrolase LOG3 (215 aa).

Residues Glu84, 102–103, 119–125, and Thr131 contribute to the substrate site; these read RK and GYGTLEE.

This sequence belongs to the LOG family. As to expression, expressed in roots and shoots. Detected in root procambium, lateral root primordia, vascular tissues of immature leaves, axillary buds, style and ovular funiculus.

It is found in the cytoplasm. The protein localises to the nucleus. It catalyses the reaction N(6)-(dimethylallyl)adenosine 5'-phosphate + H2O = N(6)-dimethylallyladenine + D-ribose 5-phosphate. The enzyme catalyses 9-ribosyl-trans-zeatin 5'-phosphate + H2O = trans-zeatin + D-ribose 5-phosphate. Cytokinin-activating enzyme working in the direct activation pathway. Phosphoribohydrolase that converts inactive cytokinin nucleotides to the biologically active free-base forms. The polypeptide is Cytokinin riboside 5'-monophosphate phosphoribohydrolase LOG3 (LOG3) (Arabidopsis thaliana (Mouse-ear cress)).